The following is a 329-amino-acid chain: Glycerol-3-phosphate dehydrogenase [NAD(P)+] (329 aa).

S13, W14, H34, and K105 together coordinate NADPH. Sn-glycerol 3-phosphate is bound by residues K105, G134, and S136. A138 lines the NADPH pocket. Sn-glycerol 3-phosphate contacts are provided by K189, D242, S252, R253, and N254. The active-site Proton acceptor is the K189. R253 lines the NADPH pocket. Positions 277 and 279 each coordinate NADPH.

This sequence belongs to the NAD-dependent glycerol-3-phosphate dehydrogenase family.

The protein resides in the cytoplasm. The catalysed reaction is sn-glycerol 3-phosphate + NAD(+) = dihydroxyacetone phosphate + NADH + H(+). It catalyses the reaction sn-glycerol 3-phosphate + NADP(+) = dihydroxyacetone phosphate + NADPH + H(+). Its pathway is membrane lipid metabolism; glycerophospholipid metabolism. Functionally, catalyzes the reduction of the glycolytic intermediate dihydroxyacetone phosphate (DHAP) to sn-glycerol 3-phosphate (G3P), the key precursor for phospholipid synthesis. This chain is Glycerol-3-phosphate dehydrogenase [NAD(P)+], found in Legionella pneumophila subsp. pneumophila (strain Philadelphia 1 / ATCC 33152 / DSM 7513).